Here is a 616-residue protein sequence, read N- to C-terminus: Probable beta-hexosaminidase ARB_01353 (616 aa).

Residues 1-20 (MRFAKALAITAVLLSGVVEA) form the signal peptide. A disordered region spans residues 96–117 (KFDPFPDQSSKPKEKRQNAPPG). Residue asparagine 333 is glycosylated (N-linked (GlcNAc...) asparagine). Residue glutamate 361 is the Proton donor of the active site.

The protein belongs to the glycosyl hydrolase 20 family.

Its subcellular location is the secreted. It carries out the reaction Hydrolysis of terminal non-reducing N-acetyl-D-hexosamine residues in N-acetyl-beta-D-hexosaminides.. Beta-hexosaminidase that shows a broad substrate specificity. This is Probable beta-hexosaminidase ARB_01353 from Arthroderma benhamiae (strain ATCC MYA-4681 / CBS 112371) (Trichophyton mentagrophytes).